A 398-amino-acid polypeptide reads, in one-letter code: Tryptophan synthase beta chain (398 aa).

Lys-88 bears the N6-(pyridoxal phosphate)lysine mark.

It belongs to the TrpB family. As to quaternary structure, tetramer of two alpha and two beta chains. Pyridoxal 5'-phosphate is required as a cofactor.

The enzyme catalyses (1S,2R)-1-C-(indol-3-yl)glycerol 3-phosphate + L-serine = D-glyceraldehyde 3-phosphate + L-tryptophan + H2O. It participates in amino-acid biosynthesis; L-tryptophan biosynthesis; L-tryptophan from chorismate: step 5/5. The beta subunit is responsible for the synthesis of L-tryptophan from indole and L-serine. The protein is Tryptophan synthase beta chain of Histophilus somni (strain 2336) (Haemophilus somnus).